A 337-amino-acid polypeptide reads, in one-letter code: uncharacterized protein (337 aa).

The next 2 membrane-spanning stretches (helical) occupy residues Phe4–Ile24 and Leu26–Leu46.

Belongs to the plectrovirus ORF2 family.

Its subcellular location is the host membrane. This is an uncharacterized protein from Spiroplasma melliferum (SpV1).